Reading from the N-terminus, the 100-residue chain is Vesicle-associated membrane protein 8 (100 aa).

Residues 1–74 (MEASGSAGND…ARKFWWKNVK (74 aa)) are Cytoplasmic-facing. A phosphoserine mark is found at Ser4 and Ser17. The 61-residue stretch at 11-71 (RVRNLQSEVE…QKVARKFWWK (61 aa)) folds into the v-SNARE coiled-coil homology domain. Residues Thr27, Thr47, and Thr53 each carry the phosphothreonine modification. Phosphoserine is present on Ser54. Residues 75–95 (MIVIICVIVLIILILIILFAT) traverse the membrane as a helical; Anchor for type IV membrane protein segment. Over 96–100 (GTIPT) the chain is Vesicular.

The protein belongs to the synaptobrevin family. In terms of assembly, forms a SNARE complex composed of VAMP8, SNAP29 and STX17 involved in fusion of autophagosome with lysosome. Found in a number of SNARE complexes with NAPA, SNAP23, SNAP25, STX1A, STX4, STX7, STX8 and VTI1B. Interacts with PICALM. SNARE complex formation and binding by PICALM are mutually exclusive processes for VAMP8. Interacts with SBF2/MTMR13. Interacts with RAB21 (in GTP-bound form) in response to starvation; the interaction probably regulates VAMP8 endolysosomal trafficking. Interacts with STX17; this interaction is increased in the absence of TMEM39A. Interacts with TRIM6. As to expression, expressed (at protein level) at a high level in kidney, lung and spleen; at a lower level in testis, liver, brain and heart. Expressed in kidney and retinal pigment epithelium derived cell line.

It is found in the lysosome membrane. The protein resides in the late endosome membrane. It localises to the early endosome membrane. Its subcellular location is the midbody. The protein localises to the cell membrane. It is found in the zymogen granule membrane. Its function is as follows. SNAREs, soluble N-ethylmaleimide-sensitive factor-attachment protein receptors, are essential proteins for fusion of cellular membranes. SNAREs localized on opposing membranes assemble to form a trans-SNARE complex, an extended, parallel four alpha-helical bundle that drives membrane fusion. VAMP8 is a SNARE involved in autophagy through the direct control of autophagosome membrane fusion with the lysososome membrane via its interaction with the STX17-SNAP29 binary t-SNARE complex. Also required for dense-granule secretion in platelets. Also plays a role in regulated enzyme secretion in pancreatic acinar cells. Involved in the abscission of the midbody during cell division, which leads to completely separate daughter cells. Involved in the homotypic fusion of early and late endosomes. Also participates in the activation of type I interferon antiviral response through a TRIM6-dependent mechanism. The protein is Vesicle-associated membrane protein 8 of Rattus norvegicus (Rat).